The sequence spans 255 residues: Hydroxyacylglutathione hydrolase (255 aa).

Positions 56, 58, 60, 61, 114, 133, and 171 each coordinate Zn(2+).

This sequence belongs to the metallo-beta-lactamase superfamily. Glyoxalase II family. Monomer. Requires Zn(2+) as cofactor.

The catalysed reaction is an S-(2-hydroxyacyl)glutathione + H2O = a 2-hydroxy carboxylate + glutathione + H(+). Its pathway is secondary metabolite metabolism; methylglyoxal degradation; (R)-lactate from methylglyoxal: step 2/2. Its function is as follows. Thiolesterase that catalyzes the hydrolysis of S-D-lactoyl-glutathione to form glutathione and D-lactic acid. The chain is Hydroxyacylglutathione hydrolase from Fuscovulum blasticum (Rhodobacter blasticus).